Reading from the N-terminus, the 335-residue chain is Protein-arginine kinase (335 aa).

One can recognise a Phosphagen kinase C-terminal domain in the interval 21–244 (IVMSSRIRLA…NQIIHDEKQI (224 aa)). ATP-binding positions include 24–28 (SSRIR), H82, R115, 166–170 (RASVM), and 197–202 (RGIYGE).

This sequence belongs to the ATP:guanido phosphotransferase family.

The catalysed reaction is L-arginyl-[protein] + ATP = N(omega)-phospho-L-arginyl-[protein] + ADP + H(+). In terms of biological role, catalyzes the specific phosphorylation of arginine residues in proteins. The chain is Protein-arginine kinase from Staphylococcus aureus (strain Mu3 / ATCC 700698).